A 62-amino-acid polypeptide reads, in one-letter code: Photosystem II reaction center protein Z (62 aa).

Helical transmembrane passes span 8-28 (SVFALVAISFLLVVGVPVVLA) and 41-61 (FSGASLWIALVFLVGVLNSFI).

The protein belongs to the PsbZ family. PSII is composed of 1 copy each of membrane proteins PsbA, PsbB, PsbC, PsbD, PsbE, PsbF, PsbH, PsbI, PsbJ, PsbK, PsbL, PsbM, PsbT, PsbY, PsbZ, Psb30/Ycf12, at least 3 peripheral proteins of the oxygen-evolving complex and a large number of cofactors. It forms dimeric complexes.

Its subcellular location is the plastid. It is found in the chloroplast thylakoid membrane. In terms of biological role, may control the interaction of photosystem II (PSII) cores with the light-harvesting antenna, regulates electron flow through the 2 photosystem reaction centers. PSII is a light-driven water plastoquinone oxidoreductase, using light energy to abstract electrons from H(2)O, generating a proton gradient subsequently used for ATP formation. In Chaetosphaeridium globosum (Charophycean green alga), this protein is Photosystem II reaction center protein Z.